Here is a 107-residue protein sequence, read N- to C-terminus: MVNFNQFLKQAQTMQKKMQEAQEQMANTRYTGKAGGGLVEIIATGKGEVEKVSIDASLLKEEEKEMLEDLIKVAFNDAKQKCDADSQNSMSGALSGMSLPPGFKMPF.

The protein belongs to the YbaB/EbfC family. As to quaternary structure, homodimer.

It localises to the cytoplasm. The protein localises to the nucleoid. Binds to DNA and alters its conformation. May be involved in regulation of gene expression, nucleoid organization and DNA protection. The protein is Nucleoid-associated protein RBE_0048 of Rickettsia bellii (strain RML369-C).